A 477-amino-acid chain; its full sequence is Histone-lysine N-methyltransferase SUV39H2 (477 aa).

Residues 1–59 (MATARAKARGSEAGARCHRAPGPPPRPKARRTARRRRAETLTARRSRPSAGERRAGSQR) form a disordered region. The segment covering 27 to 37 (PKARRTARRRR) has biased composition (basic residues). Positions 118 to 176 (YEVEYLCDYKVAKGVEYYLVKWKGWPDSTNTWEPLRNLRCPQLLRQFSDDKKTYLAQER) constitute a Chromo domain. One can recognise a Pre-SET domain in the interval 256 to 314 (FGCSCTDCFFDKCCPAEAGVVLAYNKKQQIKIQPGTPIYECNSRCRCGPECPNRIVQKG). Cys-258, Cys-260, Cys-263, Cys-268, Cys-269, Cys-296, Cys-300, Cys-302, and Cys-306 together coordinate Zn(2+). The region spanning 317 to 440 (YSLCIFKTSN…AGEELTFDYQ (124 aa)) is the SET domain. S-adenosyl-L-methionine-binding positions include 328-330 (CGW), Tyr-371, and 397-398 (NH). Cys-400 is a Zn(2+) binding site. 3 positions are modified to phosphoserine: Ser-448, Ser-451, and Ser-455. Residues 461–477 (VRTQCKCGAETCRGYLN) enclose the Post-SET domain. Zn(2+) is bound by residues Cys-465, Cys-467, and Cys-472.

Belongs to the class V-like SAM-binding methyltransferase superfamily. Histone-lysine methyltransferase family. Suvar3-9 subfamily. Interacts with SMAD5. The large PER complex involved in the histone methylation is composed of at least PER2, CBX3, TRIM28, SUV39H1 and/or SUV39H2; CBX3 mediates the formation of the complex. Ubiquitinated by the DCX(DCAF13) E3 ubiquitin ligase complex, leading to its degradation. Testis specific; predominant expression in type B spermatogonia and preleptotene spermatocytes.

Its subcellular location is the nucleus. It localises to the chromosome. The protein resides in the centromere. It carries out the reaction L-lysyl(9)-[histone H3] + 3 S-adenosyl-L-methionine = N(6),N(6),N(6)-trimethyl-L-lysyl(9)-[histone H3] + 3 S-adenosyl-L-homocysteine + 3 H(+). Histone methyltransferase that specifically trimethylates 'Lys-9' of histone H3 using monomethylated H3 'Lys-9' as substrate. H3 'Lys-9' trimethylation represents a specific tag for epigenetic transcriptional repression by recruiting HP1 (CBX1, CBX3 and/or CBX5) proteins to methylated histones. Mainly functions in heterochromatin regions, thereby playing a central role in the establishment of constitutive heterochromatin at pericentric and telomere regions. H3 'Lys-9' trimethylation is also required to direct DNA methylation at pericentric repeats. SUV39H1 is targeted to histone H3 via its interaction with RB1 and is involved in many processes, such as cell cycle regulation, transcriptional repression and regulation of telomere length. May participate in regulation of higher-order chromatin organization during spermatogenesis. Recruited by the large PER complex to the E-box elements of the circadian target genes such as PER2 itself or PER1, contributes to the conversion of local chromatin to a heterochromatin-like repressive state through H3 'Lys-9' trimethylation. This chain is Histone-lysine N-methyltransferase SUV39H2 (Suv39h2), found in Mus musculus (Mouse).